The sequence spans 67 residues: MARITVEDCLKQIPNRFELALAATYRARQLAQGHTPKIESRDKPTVVALREIAAGQVGLEMLKKVPV.

Belongs to the RNA polymerase subunit omega family. In terms of assembly, the RNAP catalytic core consists of 2 alpha, 1 beta, 1 beta' and 1 omega subunit. When a sigma factor is associated with the core the holoenzyme is formed, which can initiate transcription.

The catalysed reaction is RNA(n) + a ribonucleoside 5'-triphosphate = RNA(n+1) + diphosphate. Functionally, promotes RNA polymerase assembly. Latches the N- and C-terminal regions of the beta' subunit thereby facilitating its interaction with the beta and alpha subunits. This chain is DNA-directed RNA polymerase subunit omega, found in Burkholderia multivorans (strain ATCC 17616 / 249).